Reading from the N-terminus, the 185-residue chain is Large ribosomal subunit protein uL5 (185 aa).

The protein belongs to the universal ribosomal protein uL5 family. As to quaternary structure, part of the 50S ribosomal subunit; part of the 5S rRNA/L5/L18/L25 subcomplex. Contacts the 5S rRNA and the P site tRNA. Forms a bridge to the 30S subunit in the 70S ribosome.

In terms of biological role, this is one of the proteins that bind and probably mediate the attachment of the 5S RNA into the large ribosomal subunit, where it forms part of the central protuberance. In the 70S ribosome it contacts protein S13 of the 30S subunit (bridge B1b), connecting the 2 subunits; this bridge is implicated in subunit movement. Contacts the P site tRNA; the 5S rRNA and some of its associated proteins might help stabilize positioning of ribosome-bound tRNAs. This is Large ribosomal subunit protein uL5 from Streptomyces coelicolor (strain ATCC BAA-471 / A3(2) / M145).